Here is a 349-residue protein sequence, read N- to C-terminus: Probable dual-specificity RNA methyltransferase RlmN (349 aa).

Glutamate 94 (proton acceptor) is an active-site residue. A Radical SAM core domain is found at 100–321 (DEDRATLCVS…TQHGVFATIR (222 aa)). Cysteines 107 and 332 form a disulfide. [4Fe-4S] cluster contacts are provided by cysteine 114, cysteine 118, and cysteine 121. S-adenosyl-L-methionine contacts are provided by residues 159–160 (GE), serine 191, 213–215 (SMH), and histidine 289. The active-site S-methylcysteine intermediate is cysteine 332.

The protein belongs to the radical SAM superfamily. RlmN family. It depends on [4Fe-4S] cluster as a cofactor.

It is found in the cytoplasm. It carries out the reaction adenosine(2503) in 23S rRNA + 2 reduced [2Fe-2S]-[ferredoxin] + 2 S-adenosyl-L-methionine = 2-methyladenosine(2503) in 23S rRNA + 5'-deoxyadenosine + L-methionine + 2 oxidized [2Fe-2S]-[ferredoxin] + S-adenosyl-L-homocysteine. It catalyses the reaction adenosine(37) in tRNA + 2 reduced [2Fe-2S]-[ferredoxin] + 2 S-adenosyl-L-methionine = 2-methyladenosine(37) in tRNA + 5'-deoxyadenosine + L-methionine + 2 oxidized [2Fe-2S]-[ferredoxin] + S-adenosyl-L-homocysteine. In terms of biological role, specifically methylates position 2 of adenine 2503 in 23S rRNA and position 2 of adenine 37 in tRNAs. The chain is Probable dual-specificity RNA methyltransferase RlmN from Phocaeicola vulgatus (strain ATCC 8482 / DSM 1447 / JCM 5826 / CCUG 4940 / NBRC 14291 / NCTC 11154) (Bacteroides vulgatus).